The chain runs to 375 residues: Succinyl-diaminopimelate desuccinylase (375 aa).

Position 66 (His66) interacts with Zn(2+). Asp68 is an active-site residue. Asp99 provides a ligand contact to Zn(2+). Glu133 (proton acceptor) is an active-site residue. Glu134, Glu162, and His348 together coordinate Zn(2+).

It belongs to the peptidase M20A family. DapE subfamily. Homodimer. Requires Zn(2+) as cofactor. Co(2+) is required as a cofactor.

It catalyses the reaction N-succinyl-(2S,6S)-2,6-diaminopimelate + H2O = (2S,6S)-2,6-diaminopimelate + succinate. The protein operates within amino-acid biosynthesis; L-lysine biosynthesis via DAP pathway; LL-2,6-diaminopimelate from (S)-tetrahydrodipicolinate (succinylase route): step 3/3. In terms of biological role, catalyzes the hydrolysis of N-succinyl-L,L-diaminopimelic acid (SDAP), forming succinate and LL-2,6-diaminopimelate (DAP), an intermediate involved in the bacterial biosynthesis of lysine and meso-diaminopimelic acid, an essential component of bacterial cell walls. This is Succinyl-diaminopimelate desuccinylase from Shigella boydii serotype 18 (strain CDC 3083-94 / BS512).